The chain runs to 319 residues: Ribosomal RNA small subunit methyltransferase H (319 aa).

S-adenosyl-L-methionine contacts are provided by residues 52-54 (GGH), aspartate 70, phenylalanine 100, aspartate 126, and glutamine 133. The disordered stretch occupies residues 289-319 (PKPLSPSELERQRNPRARSAKLRVAARSSQM).

Belongs to the methyltransferase superfamily. RsmH family.

The protein localises to the cytoplasm. The enzyme catalyses cytidine(1402) in 16S rRNA + S-adenosyl-L-methionine = N(4)-methylcytidine(1402) in 16S rRNA + S-adenosyl-L-homocysteine + H(+). In terms of biological role, specifically methylates the N4 position of cytidine in position 1402 (C1402) of 16S rRNA. The chain is Ribosomal RNA small subunit methyltransferase H from Synechococcus sp. (strain JA-2-3B'a(2-13)) (Cyanobacteria bacterium Yellowstone B-Prime).